Reading from the N-terminus, the 232-residue chain is 2,3-bisphosphoglycerate-dependent phosphoglycerate mutase (232 aa).

Residues 8–15 (RHGESLWN), 21–22 (TG), arginine 60, 87–90 (ERHY), lysine 98, 114–115 (RR), and 183–184 (GN) contribute to the substrate site. Histidine 9 serves as the catalytic Tele-phosphohistidine intermediate. Residue glutamate 87 is the Proton donor/acceptor of the active site.

The protein belongs to the phosphoglycerate mutase family. BPG-dependent PGAM subfamily.

The enzyme catalyses (2R)-2-phosphoglycerate = (2R)-3-phosphoglycerate. It participates in carbohydrate degradation; glycolysis; pyruvate from D-glyceraldehyde 3-phosphate: step 3/5. Its function is as follows. Catalyzes the interconversion of 2-phosphoglycerate and 3-phosphoglycerate. This is 2,3-bisphosphoglycerate-dependent phosphoglycerate mutase from Clostridium beijerinckii (strain ATCC 51743 / NCIMB 8052) (Clostridium acetobutylicum).